The primary structure comprises 187 residues: Protein GrpE (187 aa).

The segment at 1–30 (MEKKETKSESEKTNKQDNKNTKSQKKENLN) is disordered.

This sequence belongs to the GrpE family. As to quaternary structure, homodimer.

Its subcellular location is the cytoplasm. Its function is as follows. Participates actively in the response to hyperosmotic and heat shock by preventing the aggregation of stress-denatured proteins, in association with DnaK and GrpE. It is the nucleotide exchange factor for DnaK and may function as a thermosensor. Unfolded proteins bind initially to DnaJ; upon interaction with the DnaJ-bound protein, DnaK hydrolyzes its bound ATP, resulting in the formation of a stable complex. GrpE releases ADP from DnaK; ATP binding to DnaK triggers the release of the substrate protein, thus completing the reaction cycle. Several rounds of ATP-dependent interactions between DnaJ, DnaK and GrpE are required for fully efficient folding. This Borreliella burgdorferi (strain ATCC 35210 / DSM 4680 / CIP 102532 / B31) (Borrelia burgdorferi) protein is Protein GrpE.